A 37-amino-acid polypeptide reads, in one-letter code: MKVRPSVKKMCEKCKIIKRKGVVRVICVNPKHKQRQG.

This sequence belongs to the bacterial ribosomal protein bL36 family.

The sequence is that of Large ribosomal subunit protein bL36 from Nitratiruptor sp. (strain SB155-2).